Reading from the N-terminus, the 445-residue chain is T-box transcription factor TBX19 (445 aa).

Positions 45–218 (LEDAPLWQRF…YNPFAKAFLD (174 aa)) form a DNA-binding region, T-box.

The protein resides in the nucleus. Transcriptional regulator involved in developmental processes. Can activate POMC gene expression and repress the alpha glycoprotein subunit and thyroid-stimulating hormone beta promoters. The sequence is that of T-box transcription factor TBX19 from Canis lupus familiaris (Dog).